The following is a 489-amino-acid chain: Glutamyl-tRNA(Gln) amidotransferase subunit A (489 aa).

Residues Lys-77 and Ser-157 each act as charge relay system in the active site. Ser-181 (acyl-ester intermediate) is an active-site residue.

It belongs to the amidase family. GatA subfamily. In terms of assembly, heterotrimer of A, B and C subunits.

It carries out the reaction L-glutamyl-tRNA(Gln) + L-glutamine + ATP + H2O = L-glutaminyl-tRNA(Gln) + L-glutamate + ADP + phosphate + H(+). In terms of biological role, allows the formation of correctly charged Gln-tRNA(Gln) through the transamidation of misacylated Glu-tRNA(Gln) in organisms which lack glutaminyl-tRNA synthetase. The reaction takes place in the presence of glutamine and ATP through an activated gamma-phospho-Glu-tRNA(Gln). This Caulobacter vibrioides (strain ATCC 19089 / CIP 103742 / CB 15) (Caulobacter crescentus) protein is Glutamyl-tRNA(Gln) amidotransferase subunit A.